Here is an 874-residue protein sequence, read N- to C-terminus: Valine--tRNA ligase (874 aa).

A 'HIGH' region motif is present at residues 51-61; that stretch reads PNVTGVLHIGH. The 'KMSKS' region motif lies at 533 to 537; it reads KMSKS. Lys-536 provides a ligand contact to ATP. A coiled-coil region spans residues 813 to 873; sequence LVARLKKQLE…IKQELDLLEQ (61 aa).

Belongs to the class-I aminoacyl-tRNA synthetase family. ValS type 1 subfamily. As to quaternary structure, monomer.

It localises to the cytoplasm. The catalysed reaction is tRNA(Val) + L-valine + ATP = L-valyl-tRNA(Val) + AMP + diphosphate. In terms of biological role, catalyzes the attachment of valine to tRNA(Val). As ValRS can inadvertently accommodate and process structurally similar amino acids such as threonine, to avoid such errors, it has a 'posttransfer' editing activity that hydrolyzes mischarged Thr-tRNA(Val) in a tRNA-dependent manner. The sequence is that of Valine--tRNA ligase from Helicobacter pylori (strain ATCC 700392 / 26695) (Campylobacter pylori).